The sequence spans 151 residues: MHALQAKILDPRIGNEFPLPAYATPGSAGLDLRAMLKEDTVLEPGQTLLIPTGLSIYVGDPGLAALILPRSGLGHKHGIVLGNLVGLIDSDYQGELMVSCWNRGQTAFNIAVGERIAQLVLVPVVQAHFELVEEFDETQRGAGGFGHSGSH.

Substrate is bound by residues 70 to 72, Asn-83, 87 to 89, and Met-97; these read RSG and LID.

This sequence belongs to the dUTPase family. Mg(2+) is required as a cofactor.

It catalyses the reaction dUTP + H2O = dUMP + diphosphate + H(+). It participates in pyrimidine metabolism; dUMP biosynthesis; dUMP from dCTP (dUTP route): step 2/2. Its function is as follows. This enzyme is involved in nucleotide metabolism: it produces dUMP, the immediate precursor of thymidine nucleotides and it decreases the intracellular concentration of dUTP so that uracil cannot be incorporated into DNA. The sequence is that of Deoxyuridine 5'-triphosphate nucleotidohydrolase from Pseudomonas fluorescens (strain SBW25).